Consider the following 305-residue polypeptide: Glycine--tRNA ligase alpha subunit (305 aa).

This sequence belongs to the class-II aminoacyl-tRNA synthetase family. Tetramer of two alpha and two beta subunits.

It localises to the cytoplasm. The enzyme catalyses tRNA(Gly) + glycine + ATP = glycyl-tRNA(Gly) + AMP + diphosphate. The chain is Glycine--tRNA ligase alpha subunit from Heliobacterium modesticaldum (strain ATCC 51547 / Ice1).